We begin with the raw amino-acid sequence, 562 residues long: MKKREHLGLGFFEWQIILWLSIWLAISQQALGLRPIREKPRSWSDEWLFGRKQEAEVGPFSAWNITGTYRGTWKFLNSLNSSSKFQDFQKENGNSVVELVAVPTKITGVHYVQGVVVFHDVFDNEQNVGGAQINLEGVYIWPFRQLRLVANSGKESDSGQEDNNLLSNPYHLLGIFSSQVFQESPRDRLLKRKLSPVNEMEKHCNIEIAAQVSRVASSENNGDKNYYHMEGLMESPGVGDDGDCFSPLLLNATSVNVEVYYNKAVNYTLMVTFVSFLQVLLLIRQMEHGNTQSGAAKVSIVMIGQQAIMDAYLCLLHLTAGILVESLFNAFATAAFFKFVVFSIFEMRYLLAIWKATRPSNSGEGWETMRRELSFLYSRFYGILLGGILIMYQFHNYMQPILLLMYSFWIPQIVANVVRDSRKPLHPYYILGMTATRLAIPLYVFGCPHNFMRVEPNKVWCICLCTFMGLQAVILLLQHYFGSRCFVPRQMLPEKYNYHRRFNRDVSRTTDCVICMTAIDLRQHTSDCMVTPCEHFFHSGCLQRWMDIKMECPTCRRSLPPA.

An N-terminal signal peptide occupies residues 1–32 (MKKREHLGLGFFEWQIILWLSIWLAISQQALG). At 33-262 (LRPIREKPRS…TSVNVEVYYN (230 aa)) the chain is on the lumenal side. The chain crosses the membrane as a helical span at residues 263-283 (KAVNYTLMVTFVSFLQVLLLI). Residues 284–297 (RQMEHGNTQSGAAK) are Cytoplasmic-facing. Residues 298–318 (VSIVMIGQQAIMDAYLCLLHL) traverse the membrane as a helical segment. The Lumenal segment spans residues 319 to 321 (TAG). Residues 322–342 (ILVESLFNAFATAAFFKFVVF) form a helical membrane-spanning segment. The Cytoplasmic segment spans residues 343 to 373 (SIFEMRYLLAIWKATRPSNSGEGWETMRREL). A helical membrane pass occupies residues 374–394 (SFLYSRFYGILLGGILIMYQF). Residues 395–397 (HNY) lie on the Lumenal side of the membrane. Residues 398–418 (MQPILLLMYSFWIPQIVANVV) form a helical membrane-spanning segment. Over 419 to 426 (RDSRKPLH) the chain is Cytoplasmic. Residues 427 to 447 (PYYILGMTATRLAIPLYVFGC) form a helical membrane-spanning segment. Topologically, residues 448–458 (PHNFMRVEPNK) are lumenal. The helical transmembrane segment at 459–479 (VWCICLCTFMGLQAVILLLQH) threads the bilayer. At 480–562 (YFGSRCFVPR…PTCRRSLPPA (83 aa)) the chain is on the cytoplasmic side. An RING-type; atypical zinc finger spans residues 512–556 (CVICMTAIDLRQHTSDCMVTPCEHFFHSGCLQRWMDIKMECPTCR).

As to expression, highly expressed in stems. Expressed in root xylem and seed coat.

The protein resides in the endomembrane system. It catalyses the reaction S-ubiquitinyl-[E2 ubiquitin-conjugating enzyme]-L-cysteine + [acceptor protein]-L-lysine = [E2 ubiquitin-conjugating enzyme]-L-cysteine + N(6)-ubiquitinyl-[acceptor protein]-L-lysine.. Its pathway is protein modification; protein ubiquitination. Its function is as follows. E3 ubiquitin-protein ligase that regulates the degree of methylesterification of pectin in seed mucilage. May be involved in the recycling of pectin methylesterase enzymes in the endomembrane system of seed coat epidermal cells. Possesses E3 ubiquitin-protein ligase activity in vitro when associated with the E1 enzyme UBA1 and the E2 enzyme UBC8. May be involved in xylem development. The chain is Transmembrane E3 ubiquitin-protein ligase FLY1 from Arabidopsis thaliana (Mouse-ear cress).